The chain runs to 243 residues: Uridylate kinase (243 aa).

12–15 contacts ATP; sequence KLSG. The interval 20-25 is involved in allosteric activation by GTP; the sequence is GPGGSG. Gly-56 lines the UMP pocket. The ATP site is built by Gly-57 and Arg-61. UMP contacts are provided by residues Asp-76 and 137–144; that span reads TGSPYFST. Residues Asn-165, Tyr-171, and Asp-174 each coordinate ATP.

It belongs to the UMP kinase family. In terms of assembly, homohexamer.

The protein localises to the cytoplasm. The catalysed reaction is UMP + ATP = UDP + ADP. It participates in pyrimidine metabolism; CTP biosynthesis via de novo pathway; UDP from UMP (UMPK route): step 1/1. With respect to regulation, allosterically activated by GTP. Inhibited by UTP. In terms of biological role, catalyzes the reversible phosphorylation of UMP to UDP. The polypeptide is Uridylate kinase (Oenococcus oeni (strain ATCC BAA-331 / PSU-1)).